Reading from the N-terminus, the 271-residue chain is tRNA (guanine-N(1)-)-methyltransferase (271 aa).

S-adenosyl-L-methionine is bound by residues glycine 120 and 145 to 150 (IGDYVL).

This sequence belongs to the RNA methyltransferase TrmD family. In terms of assembly, homodimer.

The protein localises to the cytoplasm. The catalysed reaction is guanosine(37) in tRNA + S-adenosyl-L-methionine = N(1)-methylguanosine(37) in tRNA + S-adenosyl-L-homocysteine + H(+). Specifically methylates guanosine-37 in various tRNAs. The sequence is that of tRNA (guanine-N(1)-)-methyltransferase from Bifidobacterium longum subsp. infantis (strain ATCC 15697 / DSM 20088 / JCM 1222 / NCTC 11817 / S12).